We begin with the raw amino-acid sequence, 126 residues long: Small ribosomal subunit protein uS13 (126 aa).

The segment at H92 to K126 is disordered.

Belongs to the universal ribosomal protein uS13 family. Part of the 30S ribosomal subunit. Forms a loose heterodimer with protein S19. Forms two bridges to the 50S subunit in the 70S ribosome.

Functionally, located at the top of the head of the 30S subunit, it contacts several helices of the 16S rRNA. In the 70S ribosome it contacts the 23S rRNA (bridge B1a) and protein L5 of the 50S subunit (bridge B1b), connecting the 2 subunits; these bridges are implicated in subunit movement. Contacts the tRNAs in the A and P-sites. The chain is Small ribosomal subunit protein uS13 from Kineococcus radiotolerans (strain ATCC BAA-149 / DSM 14245 / SRS30216).